Here is a 566-residue protein sequence, read N- to C-terminus: Alpha-keto-acid decarboxylase (566 aa).

Residue Glu-61 participates in thiamine diphosphate binding. The segment at Thr-396–Val-478 is thiamine pyrophosphate binding. Mg(2+) contacts are provided by Asp-446, Asn-473, and Gly-475.

The protein belongs to the TPP enzyme family. It depends on a metal cation as a cofactor. Requires thiamine diphosphate as cofactor.

In terms of biological role, decarboxylates branched-chain and aromatic alpha-keto acids to aldehydes. The sequence is that of Alpha-keto-acid decarboxylase (kdc) from Mycobacterium ulcerans (strain Agy99).